Reading from the N-terminus, the 183-residue chain is 2-C-methyl-D-erythritol 2,4-cyclodiphosphate synthase (183 aa).

A divalent metal cation is bound by residues Asp8 and His10. Residues 8-10 and 34-35 each bind 4-CDP-2-C-methyl-D-erythritol 2-phosphate; these read DVH and HS. His42 provides a ligand contact to a divalent metal cation. 4-CDP-2-C-methyl-D-erythritol 2-phosphate is bound by residues 56 to 58, 61 to 65, 132 to 135, and Phe139; these read DIG, FPDTD, and TTEE.

The protein belongs to the IspF family. Homotrimer. A divalent metal cation is required as a cofactor.

It carries out the reaction 4-CDP-2-C-methyl-D-erythritol 2-phosphate = 2-C-methyl-D-erythritol 2,4-cyclic diphosphate + CMP. It participates in isoprenoid biosynthesis; isopentenyl diphosphate biosynthesis via DXP pathway; isopentenyl diphosphate from 1-deoxy-D-xylulose 5-phosphate: step 4/6. Its function is as follows. Involved in the biosynthesis of isopentenyl diphosphate (IPP) and dimethylallyl diphosphate (DMAPP), two major building blocks of isoprenoid compounds. Catalyzes the conversion of 4-diphosphocytidyl-2-C-methyl-D-erythritol 2-phosphate (CDP-ME2P) to 2-C-methyl-D-erythritol 2,4-cyclodiphosphate (ME-CPP) with a corresponding release of cytidine 5-monophosphate (CMP). In Lachnospira eligens (strain ATCC 27750 / DSM 3376 / VPI C15-48 / C15-B4) (Eubacterium eligens), this protein is 2-C-methyl-D-erythritol 2,4-cyclodiphosphate synthase.